The chain runs to 382 residues: UDP-N-acetylglucosamine--N-acetylmuramyl-(pentapeptide) pyrophosphoryl-undecaprenol N-acetylglucosamine transferase (382 aa).

Residues 11 to 13 (TGG), N117, R160, S209, and Q311 contribute to the UDP-N-acetyl-alpha-D-glucosamine site.

It belongs to the glycosyltransferase 28 family. MurG subfamily.

Its subcellular location is the cell inner membrane. It carries out the reaction di-trans,octa-cis-undecaprenyl diphospho-N-acetyl-alpha-D-muramoyl-L-alanyl-D-glutamyl-meso-2,6-diaminopimeloyl-D-alanyl-D-alanine + UDP-N-acetyl-alpha-D-glucosamine = di-trans,octa-cis-undecaprenyl diphospho-[N-acetyl-alpha-D-glucosaminyl-(1-&gt;4)]-N-acetyl-alpha-D-muramoyl-L-alanyl-D-glutamyl-meso-2,6-diaminopimeloyl-D-alanyl-D-alanine + UDP + H(+). It functions in the pathway cell wall biogenesis; peptidoglycan biosynthesis. In terms of biological role, cell wall formation. Catalyzes the transfer of a GlcNAc subunit on undecaprenyl-pyrophosphoryl-MurNAc-pentapeptide (lipid intermediate I) to form undecaprenyl-pyrophosphoryl-MurNAc-(pentapeptide)GlcNAc (lipid intermediate II). In Rickettsia akari (strain Hartford), this protein is UDP-N-acetylglucosamine--N-acetylmuramyl-(pentapeptide) pyrophosphoryl-undecaprenol N-acetylglucosamine transferase.